The following is a 291-amino-acid chain: Lipoyl synthase, mitochondrial (291 aa).

The [4Fe-4S] cluster site is built by cysteine 45, cysteine 50, cysteine 56, cysteine 71, cysteine 75, cysteine 78, and serine 283. The Radical SAM core domain maps to 57-272; that stretch reads WGEGTATFMI…EKIGKELGFR (216 aa).

Belongs to the radical SAM superfamily. Lipoyl synthase family. [4Fe-4S] cluster is required as a cofactor.

The protein localises to the mitochondrion. It catalyses the reaction [[Fe-S] cluster scaffold protein carrying a second [4Fe-4S](2+) cluster] + N(6)-octanoyl-L-lysyl-[protein] + 2 oxidized [2Fe-2S]-[ferredoxin] + 2 S-adenosyl-L-methionine + 4 H(+) = [[Fe-S] cluster scaffold protein] + N(6)-[(R)-dihydrolipoyl]-L-lysyl-[protein] + 4 Fe(3+) + 2 hydrogen sulfide + 2 5'-deoxyadenosine + 2 L-methionine + 2 reduced [2Fe-2S]-[ferredoxin]. It functions in the pathway protein modification; protein lipoylation via endogenous pathway; protein N(6)-(lipoyl)lysine from octanoyl-[acyl-carrier-protein]: step 2/2. Catalyzes the radical-mediated insertion of two sulfur atoms into the C-6 and C-8 positions of the octanoyl moiety bound to the lipoyl domains of lipoate-dependent enzymes, thereby converting the octanoylated domains into lipoylated derivatives. The protein is Lipoyl synthase, mitochondrial of Nematostella vectensis (Starlet sea anemone).